A 152-amino-acid polypeptide reads, in one-letter code: Probable methionine-R-sulfoxide reductase B (152 aa).

The region spanning 27–151 (QTEWKSVLPN…NSVCMAFEKK (125 aa)) is the MsrB domain. Positions 66, 69, 116, and 119 each coordinate Zn(2+). Cys140 functions as the Nucleophile in the catalytic mechanism.

Belongs to the MsrB Met sulfoxide reductase family. The cofactor is Zn(2+).

The enzyme catalyses L-methionyl-[protein] + [thioredoxin]-disulfide + H2O = L-methionyl-(R)-S-oxide-[protein] + [thioredoxin]-dithiol. Its function is as follows. Methionine-sulfoxide reductase that specifically reduces methionine (R)-sulfoxide back to methionine. While in many cases, methionine oxidation is the result of random oxidation following oxidative stress, methionine oxidation is also a post-translational modification that takes place on specific residue. The chain is Probable methionine-R-sulfoxide reductase B from Caenorhabditis elegans.